Here is a 233-residue protein sequence, read N- to C-terminus: UPF0758 protein TTE0897 (233 aa).

Residues 108 to 230 (SVTSPEDVIN…GISLKEKGYY (123 aa)) enclose the MPN domain. 3 residues coordinate Zn(2+): His-179, His-181, and Asp-192. Residues 179-192 (HNHPSGDPTPSRED) carry the JAMM motif motif.

It belongs to the UPF0758 family.

The chain is UPF0758 protein TTE0897 from Caldanaerobacter subterraneus subsp. tengcongensis (strain DSM 15242 / JCM 11007 / NBRC 100824 / MB4) (Thermoanaerobacter tengcongensis).